The sequence spans 245 residues: Ribonuclease 3 (245 aa).

Residues 19–148 (FKVFQEKIGI…FIGALYLDQG (130 aa)) enclose the RNase III domain. A Mg(2+)-binding site is contributed by Glu61. Asp65 is a catalytic residue. Mg(2+) contacts are provided by Asp134 and Glu137. Residue Glu137 is part of the active site. Residues 174–243 (DYKSQLQELI…AAEALKKLKE (70 aa)) form the DRBM domain.

It belongs to the ribonuclease III family. In terms of assembly, homodimer. The cofactor is Mg(2+).

Its subcellular location is the cytoplasm. The enzyme catalyses Endonucleolytic cleavage to 5'-phosphomonoester.. Its function is as follows. Digests double-stranded RNA. Involved in the processing of primary rRNA transcript to yield the immediate precursors to the large and small rRNAs (23S and 16S). Processes some mRNAs, and tRNAs when they are encoded in the rRNA operon. Processes pre-crRNA and tracrRNA of type II CRISPR loci if present in the organism. In Bacillus cereus (strain ZK / E33L), this protein is Ribonuclease 3.